The following is a 395-amino-acid chain: uncharacterized protein (395 aa).

Helical transmembrane passes span 19–39 (IGIA…IAII), 49–69 (VLLI…IYEL), 87–107 (LTWI…AVGG), 137–157 (LVII…PLGT), 172–192 (YINL…FYLI), 206–226 (TINI…SLIA), 252–272 (LIGG…MGMG), 279–299 (LFIM…KILA), 311–331 (GLVF…GSLI), and 359–379 (VLCT…GAVI).

Belongs to the chloride channel (TC 2.A.49) family.

It is found in the cell membrane. This is an uncharacterized protein from Methanocaldococcus jannaschii (strain ATCC 43067 / DSM 2661 / JAL-1 / JCM 10045 / NBRC 100440) (Methanococcus jannaschii).